Reading from the N-terminus, the 763-residue chain is Lysine-specific histone demethylase 1 homolog 2 (763 aa).

Residues 53-152 (QRETETEALI…FGVSAAFPAS (100 aa)) enclose the SWIRM domain. The FAD site is built by Glu192, Arg194, Arg200, and Glu571.

This sequence belongs to the flavin monoamine oxidase family. FAD is required as a cofactor.

Its function is as follows. Probable histone demethylase. This Oryza sativa subsp. japonica (Rice) protein is Lysine-specific histone demethylase 1 homolog 2.